The following is a 410-amino-acid chain: Translation initiation factor 2 subunit gamma (410 aa).

In terms of domain architecture, tr-type G spans 6–203 (QSEINIGMVG…AIEDLMPTPE (198 aa)). The interval 15–22 (GHVDHGKT) is G1. Positions 18, 22, 43, and 45 each coordinate Mg(2+). 18–23 (DHGKTS) provides a ligand contact to GTP. The interval 43-47 (GISIR) is G2. Zn(2+) contacts are provided by cysteine 58, cysteine 61, cysteine 73, and cysteine 76. The segment at 90–93 (DAPG) is G3. GTP-binding positions include 146 to 149 (NKID) and 181 to 183 (SAH). Residues 146–149 (NKID) form a G4 region. Residues 181–183 (SAH) are G5.

It belongs to the TRAFAC class translation factor GTPase superfamily. Classic translation factor GTPase family. EIF2G subfamily. As to quaternary structure, heterotrimer composed of an alpha, a beta and a gamma chain. It depends on Mg(2+) as a cofactor.

The enzyme catalyses GTP + H2O = GDP + phosphate + H(+). Functionally, eIF-2 functions in the early steps of protein synthesis by forming a ternary complex with GTP and initiator tRNA. In Methanococcus aeolicus (strain ATCC BAA-1280 / DSM 17508 / OCM 812 / Nankai-3), this protein is Translation initiation factor 2 subunit gamma.